Consider the following 193-residue polypeptide: Molybdenum cofactor guanylyltransferase (193 aa).

Residues 8–10 (LAG), Lys21, Asp67, and Asp98 each bind GTP. Residue Asp98 coordinates Mg(2+).

This sequence belongs to the MobA family. In terms of assembly, monomer. Mg(2+) is required as a cofactor.

It localises to the cytoplasm. The catalysed reaction is Mo-molybdopterin + GTP + H(+) = Mo-molybdopterin guanine dinucleotide + diphosphate. Its function is as follows. Transfers a GMP moiety from GTP to Mo-molybdopterin (Mo-MPT) cofactor (Moco or molybdenum cofactor) to form Mo-molybdopterin guanine dinucleotide (Mo-MGD) cofactor. The chain is Molybdenum cofactor guanylyltransferase from Cereibacter sphaeroides (strain ATCC 17029 / ATH 2.4.9) (Rhodobacter sphaeroides).